A 60-amino-acid chain; its full sequence is MSEKTVKVQLVKSLIGTRESHRATVRGLGLRRLNSVSELQDTPAVRGMINKVSYLVKVIG.

Belongs to the universal ribosomal protein uL30 family. Part of the 50S ribosomal subunit.

This Burkholderia mallei (strain NCTC 10247) protein is Large ribosomal subunit protein uL30.